The primary structure comprises 269 residues: Ubiquinone/menaquinone biosynthesis C-methyltransferase UbiE (269 aa).

Residues T92, D113, and 141–142 (NA) each bind S-adenosyl-L-methionine.

This sequence belongs to the class I-like SAM-binding methyltransferase superfamily. MenG/UbiE family.

The enzyme catalyses a 2-demethylmenaquinol + S-adenosyl-L-methionine = a menaquinol + S-adenosyl-L-homocysteine + H(+). The catalysed reaction is a 2-methoxy-6-(all-trans-polyprenyl)benzene-1,4-diol + S-adenosyl-L-methionine = a 5-methoxy-2-methyl-3-(all-trans-polyprenyl)benzene-1,4-diol + S-adenosyl-L-homocysteine + H(+). It participates in quinol/quinone metabolism; menaquinone biosynthesis; menaquinol from 1,4-dihydroxy-2-naphthoate: step 2/2. Its pathway is cofactor biosynthesis; ubiquinone biosynthesis. Methyltransferase required for the conversion of demethylmenaquinol (DMKH2) to menaquinol (MKH2) and the conversion of 2-polyprenyl-6-methoxy-1,4-benzoquinol (DDMQH2) to 2-polyprenyl-3-methyl-6-methoxy-1,4-benzoquinol (DMQH2). This Brucella suis biovar 1 (strain 1330) protein is Ubiquinone/menaquinone biosynthesis C-methyltransferase UbiE.